The chain runs to 354 residues: Uroporphyrinogen decarboxylase (354 aa).

Substrate-binding positions include 27–31, phenylalanine 46, aspartate 77, tyrosine 154, threonine 209, and histidine 327; that span reads RQAGR.

The protein belongs to the uroporphyrinogen decarboxylase family. Homodimer.

It localises to the cytoplasm. The enzyme catalyses uroporphyrinogen III + 4 H(+) = coproporphyrinogen III + 4 CO2. The protein operates within porphyrin-containing compound metabolism; protoporphyrin-IX biosynthesis; coproporphyrinogen-III from 5-aminolevulinate: step 4/4. Its function is as follows. Catalyzes the decarboxylation of four acetate groups of uroporphyrinogen-III to yield coproporphyrinogen-III. The sequence is that of Uroporphyrinogen decarboxylase from Photorhabdus laumondii subsp. laumondii (strain DSM 15139 / CIP 105565 / TT01) (Photorhabdus luminescens subsp. laumondii).